A 417-amino-acid chain; its full sequence is E3 ubiquitin-protein ligase RNF135 (417 aa).

Residues 21 to 67 form an RING-type zinc finger; it reads CIICQGLLDQPTTLPCGHSFCLRCLHDLWVSKRGAVDGCPWACPICR. Disordered regions lie at residues 95-118 and 143-173; these read EVEA…TVQK and TQRP…SLDS. 2 coiled-coil regions span residues 121–145 and 180–204; these read TNVI…QTQR and SISQ…QGSV. The segment covering 143 to 164 has biased composition (polar residues); it reads TQRPNLGSGQDNAQGTPPTDSS. The B30.2/SPRY domain occupies 225-417; that stretch reads PDQRRPAPRK…NYLEIKQLNT (193 aa).

In terms of assembly, homodimer. Interacts (homodimer) with RIGI (double-stranded RNA-bound oligomeric form); involved in both RIGI ubiquitination, oligomerization into filaments associated with viral RNAs and the bridging of these filaments. Interacts with UBE2D3 and UBE2N; E2 ubiquitin ligases involved in RNF135-mediated ubiquitination of RIGI and activation of the RIG-I signaling pathway. Interacts with PCBP2. As to expression, ubiquitously expressed.

It is found in the cytoplasm. The protein localises to the stress granule. It catalyses the reaction S-ubiquitinyl-[E2 ubiquitin-conjugating enzyme]-L-cysteine + [acceptor protein]-L-lysine = [E2 ubiquitin-conjugating enzyme]-L-cysteine + N(6)-ubiquitinyl-[acceptor protein]-L-lysine.. Its pathway is protein modification; protein ubiquitination. In terms of biological role, E2-dependent E3 ubiquitin-protein ligase that functions as a RIGI coreceptor in the sensing of viral RNAs in cell cytoplasm and the activation of the antiviral innate immune response. Together with the UBE2D3, UBE2N and UB2V1 E2 ligases, catalyzes the 'Lys-63'-linked polyubiquitination of RIGI oligomerized on viral RNAs, an essential step in the activation of the RIG-I signaling pathway. Through a ubiquitin-independent parallel mechanism, which consists in bridging RIGI filaments forming on longer viral RNAs, further activates the RIG-I signaling pathway. This second mechanism that synergizes with the ubiquitin-dependent one would thereby allow an RNA length-dependent regulation of the RIG-I signaling pathway. Associated with the E2 ligase UBE2N, also constitutively synthesizes unanchored 'Lys-63'-linked polyubiquitin chains that may also activate the RIG-I signaling pathway. It is not involved in the innate immune response against DNA viruses. The chain is E3 ubiquitin-protein ligase RNF135 from Mus musculus (Mouse).